The following is a 119-amino-acid chain: Large ribosomal subunit protein bL19 (119 aa).

The protein belongs to the bacterial ribosomal protein bL19 family.

This protein is located at the 30S-50S ribosomal subunit interface and may play a role in the structure and function of the aminoacyl-tRNA binding site. The protein is Large ribosomal subunit protein bL19 of Leuconostoc mesenteroides subsp. mesenteroides (strain ATCC 8293 / DSM 20343 / BCRC 11652 / CCM 1803 / JCM 6124 / NCDO 523 / NBRC 100496 / NCIMB 8023 / NCTC 12954 / NRRL B-1118 / 37Y).